A 647-amino-acid chain; its full sequence is MEVKGKKKITGKSPQTSQGKNKFHKNSESSSAKAFPRKAAKEGGPKVTSKNFEKGATKPGKKRVKQFKNKPQGGKGPKDKFQKANKFNKKRKFQPDGKSDESAAKKPKWDDFKKKKKELKQNRQLSDKTNYDVVVRAKHIWESLRRKDCDKEKRVKLMSDLQKLIQGKIKTIAFAHDSTRVIQCLIQYGSEEQRKWAFEELQGDLVELSKAKYSRNIVKKFLMYGSKPQIAEIIRSFKGHVRKMLRHSEASAIVEYAYNDKAILEQRNMLTEELYGNTFQLYKSADHPTLEKVLEVQPGKLELILDEMKQILTPMAQKEAVIKHSLVHKVFLDFFTYAPPKLRSELIEAIREAVVYLAHTHDGARVAMHCLWHGTPKDRKVIVKTMKTYVEKIANGQYSHLVLLAAFDCIDDTKLVKQIIISEVISSLPSIVNDKYGRKVLLYLLSPRAPAHLVPEIIQLLQKGDGNAHSKKDTAIRRRELLESISPALLSYLQGHTREVVLDKSVCVLVSDILGSATGDAQPAMDAIAGLAAEELYPGGKDGELHIAEHPAGHLVLKWLIEQDKKIKENGKEGCFAKTLVECVGMKNLKSWASINRGAIVLSSLLQSCDQDVVNKVKAGLKTLIPTLEKTKSTSKGIQTLLEKLTA.

Residues 1–10 (MEVKGKKKIT) are compositionally biased toward basic residues. The interval 1-123 (MEVKGKKKIT…KKKKELKQNR (123 aa)) is disordered. N6-acetyllysine is present on lysine 33. Over residues 59 to 68 (PGKKRVKQFK) the composition is skewed to basic residues. Residues 93 to 123 (FQPDGKSDESAAKKPKWDDFKKKKKELKQNR) show a composition bias toward basic and acidic residues. Positions 105–117 (KKPKWDDFKKKKK) match the Nuclear localization signal motif. Positions 142-509 (ESLRRKDCDK…VVLDKSVCVL (368 aa)) constitute a PUM-HD domain. Pumilio repeat units lie at residues 176–211 (HDST…LSKA), 212–247 (KYSR…MLRH), 248–276 (SEAS…ELYG), 288–324 (PTLE…VIKH), 325–360 (SLVH…LAHT), 361–396 (HDGA…IANG), 397–434 (QYSH…IVND), 435–503 (KYGR…VVLD), 504–550 (KSVC…IAEH), 551–595 (PAGH…WASI), and 596–635 (NRGA…KSTS).

In terms of assembly, interacts with PARP1 (via catalytic domain).

It is found in the nucleus. The protein resides in the nucleolus. Its subcellular location is the nucleoplasm. The protein localises to the chromosome. In terms of biological role, inhibits the poly(ADP-ribosyl)ation activity of PARP1 and the degradation of PARP1 by CASP3 following genotoxic stress. Binds to double-stranded RNA or DNA without sequence specificity. Involved in development of the eye and of primordial germ cells. This chain is Pumilio homolog 3, found in Rattus norvegicus (Rat).